We begin with the raw amino-acid sequence, 143 residues long: MRVLVQRVSRAQVTVDGEVVGAIDPQPQGLLALVGVTHDDDAAKAQRLAEKLWKLRILDDERSASDVAAPILVISQFTLYANTDKGRRPSWNAAAPGSVAEPLVTEFTEALRRLGATVETGVFGAHMEVELVNDGPVTVLLEL.

Positions 135 to 136 match the Gly-cisPro motif, important for rejection of L-amino acids motif; the sequence is GP.

Belongs to the DTD family. In terms of assembly, homodimer.

Its subcellular location is the cytoplasm. It catalyses the reaction glycyl-tRNA(Ala) + H2O = tRNA(Ala) + glycine + H(+). The catalysed reaction is a D-aminoacyl-tRNA + H2O = a tRNA + a D-alpha-amino acid + H(+). An aminoacyl-tRNA editing enzyme that deacylates mischarged D-aminoacyl-tRNAs. Also deacylates mischarged glycyl-tRNA(Ala), protecting cells against glycine mischarging by AlaRS. Acts via tRNA-based rather than protein-based catalysis; rejects L-amino acids rather than detecting D-amino acids in the active site. By recycling D-aminoacyl-tRNA to D-amino acids and free tRNA molecules, this enzyme counteracts the toxicity associated with the formation of D-aminoacyl-tRNA entities in vivo and helps enforce protein L-homochirality. The chain is D-aminoacyl-tRNA deacylase from Mycolicibacterium smegmatis (strain ATCC 700084 / mc(2)155) (Mycobacterium smegmatis).